A 441-amino-acid chain; its full sequence is MPQPSLSSLYSDHLRTLTARADEALQRGGFEHLVVPSGSTHYQLFDDRDYPYAVNPQFKAWVPLTRVPNSWLVYTPGKRPTVIFYQPFDYWHVVPDAPSGWWVDHCDIHIIRTPEQALALLPKHAERCAILGEPQSTLGAYVPNNPQPVLDYLEYQRAFKTPYELALLRIAQQLAVRGHRAAEAAFRAGQSEFGIHMAYCAAVGQDANDLPYGNIIALNEHGAVLHYTELGQQPPQPLRSFLIDAGASAYGYASDITRTYAADPGSDFQALIDAVDAAQLRMGQNVRAGVDYKQLHIEAHLALMGILKEFGVLTVSPEAALATGVSAAFFPHGLGHLIGLQVHDVAGFAASDRGGRIERPAGHPYLRLTRVLEPGMVVTIEPGVYFIDMLLDEVKKNGHAASVNWQRVEAFKPYGGIRIEDEVVCTDGSAENLTRPVFASA.

Mn(2+) is bound by residues D244, D255, H336, E381, and E420.

Belongs to the peptidase M24B family. Bacterial-type prolidase subfamily. Mn(2+) serves as cofactor.

The enzyme catalyses Xaa-L-Pro dipeptide + H2O = an L-alpha-amino acid + L-proline. Splits dipeptides with a prolyl residue in the C-terminal position. This is Xaa-Pro dipeptidase from Xanthomonas euvesicatoria pv. vesicatoria (strain 85-10) (Xanthomonas campestris pv. vesicatoria).